A 3957-amino-acid chain; its full sequence is Ankyrin-2 (3957 aa).

Residues Met1 to Glu14 show a composition bias toward basic and acidic residues. The segment at Met1–Ser34 is disordered. ANK repeat units follow at residues Asp30–Gln62, Asn63–Ser92, Lys96–Ala125, Asn129–Thr158, Asp162–Val191, Leu193–Val220, Ser232–Phe261, Asn265–Ala294, Asp298–Ala327, Asn331–Asp360, Asp364–Ala393, Asn397–Ala426, Ser430–Val459, Arg463–Ala492, Glu496–Ala525, Asn529–Leu558, Lys562–Ser591, Asn595–Ala624, Asn628–Ile657, Gln661–Met690, Ser694–Ala723, Leu727–Ala756, Asn760–Ala789, and Asn793–Thr822. 2 positions are modified to phosphoserine: Ser31 and Ser34. At Tyr378 the chain carries Phosphotyrosine. Phosphotyrosine is present on Tyr531. Phosphoserine is present on Ser846. The residue at position 853 (Thr853) is a Phosphothreonine. At Ser874 the chain carries Phosphoserine. Residues Ser966–Asp1125 form an interaction with SPTBN1 region. 2 consecutive ZU5 domains span residues Phe968–Arg1156 and Lys1158–Cys1304. Positions Val1289–Glu1423 are UPA domain. At Tyr1382 the chain carries Phosphotyrosine. Positions Ile1450–Lys1535 constitute a Death 1 domain. The segment at Lys1457 to Val1486 is disordered. Residues Ser1459, Ser1461, Ser1473, Ser1500, and Ser1596 each carry the phosphoserine modification. A compositionally biased stretch (acidic residues) spans Ser1461–Met1471. Disordered stretches follow at residues Ala1670–Ser2137, Ala2197–Leu2411, Ala2430–Pro2484, Ser2507–Glu2586, Glu2604–His2852, Asp2864–Phe2904, and Gln2923–Thr2951. 2 stretches are compositionally biased toward basic and acidic residues: residues Ser1674–Pro1683 and Lys1711–Ser1733. Ser1732, Ser1733, and Ser1736 each carry phosphoserine. A compositionally biased stretch (basic and acidic residues) spans Ile1766–Gly1783. Repeat A repeat units follow at residues His1806–Arg1817, His1818–Arg1829, His1830–Arg1841, His1842–Lys1853, His1854–Arg1865, His1866–Lys1877, and His1878–Arg1889. The tract at residues His1806–Arg1983 is repeat-rich region. Residues Ser1855 and Ser1858 each carry the phosphoserine modification. Composition is skewed to basic and acidic residues over residues Lys1886–Pro1902 and Arg1921–Leu1937. The Repeat A; approximate repeat unit spans residues His1890 to Arg1900. Repeat A repeat units follow at residues His1901–Lys1912 and Arg1913–Lys1924. A Repeat A; approximate repeat occupies His1925–Lys1935. At Ser1929 the chain carries Phosphoserine. Repeat A repeat units follow at residues Arg1936–Lys1947, His1948–Lys1959, His1960–Lys1971, and Gln1972–Arg1983. Basic and acidic residues-rich tracts occupy residues Lys1980–Met1994, Pro2003–Gly2034, Val2075–Pro2093, and Glu2102–Asp2117. The residue at position 2127 (Ser2127) is a Phosphoserine. Basic and acidic residues predominate over residues Pro2128–Ser2137. At Thr2239 the chain carries Phosphothreonine. Residues Pro2240–Pro2251 are compositionally biased toward polar residues. Ser2243 carries the phosphoserine modification. Residues Lys2252–Thr2282 are compositionally biased toward basic and acidic residues. Thr2269 is subject to Phosphothreonine. A Phosphoserine modification is found at Ser2275. Positions Thr2355 to Ser2376 are enriched in polar residues. Ser2405, Ser2440, Ser2454, Ser2516, and Ser2521 each carry phosphoserine. Residues Glu2523–Glu2545 are compositionally biased toward polar residues. Composition is skewed to basic and acidic residues over residues Asn2576–Glu2586 and Glu2604–Glu2619. A Phosphothreonine modification is found at Thr2583. Phosphoserine is present on residues Ser2679 and Ser2701. The segment covering Pro2696–Pro2705 has biased composition (low complexity). Over residues Glu2729–Gly2776 the composition is skewed to basic and acidic residues. 2 positions are modified to phosphoserine: Ser2781 and Ser2795. Over residues Ser2781 to Ser2791 the composition is skewed to low complexity. Residues Ser2892–Arg2903 show a composition bias toward polar residues. Ser2956 carries the post-translational modification Phosphoserine. 3 disordered regions span residues Asn2987–Glu3016, Leu3069–Asn3099, and Gln3136–Glu3462. The span at Gln2998–Glu3016 shows a compositional bias: polar residues. Ser3075 carries the post-translational modification Phosphoserine. Thr3078 carries the phosphothreonine modification. Positions Thr3078–Thr3087 are enriched in low complexity. Polar residues predominate over residues Glu3090–Asn3099. Over residues Glu3137–Glu3149 the composition is skewed to basic and acidic residues. A compositionally biased stretch (low complexity) spans Leu3157 to Ser3169. Positions Val3175–Pro3194 are enriched in acidic residues. Polar residues-rich tracts occupy residues Ala3198–Thr3212 and Leu3256–Val3265. Phosphoserine occurs at positions 3273, 3276, and 3277. Residues Glu3335–Pro3344 show a composition bias toward basic and acidic residues. Residues Val3357–Pro3374 are compositionally biased toward polar residues. A phosphoserine mark is found at Ser3390 and Ser3409. Over residues Ser3409–Glu3423 the composition is skewed to basic and acidic residues. The span at Ser3446–Thr3460 shows a compositional bias: low complexity. Ser3474 bears the Phosphoserine mark. Residues Ile3569 to Thr3653 form the Death 2 domain. A Phosphoserine modification is found at Ser3735. A phosphothreonine mark is found at Thr3776, Thr3797, Thr3803, and Thr3814. Positions Pro3777–Thr3858 are disordered. At Ser3823 the chain carries Phosphoserine. The span at Pro3832–Pro3841 shows a compositional bias: basic and acidic residues. Ser3909 bears the Phosphoserine mark.

In terms of assembly, interacts with RHBG and SPTBN1. Colocalizes with Na/K ATPase, Na/Ca exchanger and SPTBN1. Directly interacts with DMD; this interaction is necessary for DMD localization at the sarcolemma. Interacts with DCTN4; this interaction is required for DCTN4 retention at costameres. Identified in complexes that contain VIM, EZR, AHNAK, BFSP1, BFSP2, ANK2, PLEC, PRX and spectrin. Interacts (via death domain) with RABGAP1L (via Rab-GAP TBC domain). Post-translationally, phosphorylated at multiple sites by different protein kinases and each phosphorylation event regulates the protein's structure and function. Present in plasma membrane of neurons as well as glial cells throughout the brain. Expressed in fetal brain and in temporal cortex of adult brain. Also expressed in the inner segments of rod photoreceptors in retina.

The protein resides in the cytoplasm. Its subcellular location is the cytoskeleton. The protein localises to the membrane. It is found in the myofibril. It localises to the sarcomere. The protein resides in the m line. Its subcellular location is the apical cell membrane. The protein localises to the cell membrane. It is found in the postsynaptic cell membrane. It localises to the early endosome. The protein resides in the recycling endosome. Its subcellular location is the lysosome. The protein localises to the mitochondrion. It is found in the z line. It localises to the sarcolemma. The protein resides in the T-tubule. In terms of biological role, plays an essential role in the localization and membrane stabilization of ion transporters and ion channels in several cell types, including cardiomyocytes, as well as in striated muscle cells. In skeletal muscle, required for proper localization of DMD and DCTN4 and for the formation and/or stability of a special subset of microtubules associated with costameres and neuromuscular junctions. In cardiomyocytes, required for coordinate assembly of Na/Ca exchanger, SLC8A1/NCX1, Na/K ATPases ATP1A1 and ATP1A2 and inositol 1,4,5-trisphosphate (InsP3) receptors at sarcoplasmic reticulum/sarcolemma sites. Required for expression and targeting of SPTBN1 in neonatal cardiomyocytes and for the regulation of neonatal cardiomyocyte contraction rate. In the inner segment of rod photoreceptors, required for the coordinated expression of the Na/K ATPase, Na/Ca exchanger and beta-2-spectrin (SPTBN1). Plays a role in endocytosis and intracellular protein transport. Associates with phosphatidylinositol 3-phosphate (PI3P)-positive organelles and binds dynactin to promote long-range motility of cells. Recruits RABGAP1L to (PI3P)-positive early endosomes, where RABGAP1L inactivates RAB22A, and promotes polarized trafficking to the leading edge of the migrating cells. Part of the ANK2/RABGAP1L complex which is required for the polarized recycling of fibronectin receptor ITGA5 ITGB1 to the plasma membrane that enables continuous directional cell migration. In Homo sapiens (Human), this protein is Ankyrin-2 (ANK2).